The primary structure comprises 958 residues: Importin-13 (958 aa).

20 HEAT repeats span residues 19-49 (ENVEKALHQLYYDPNIENKNLAQKWLMQAQV), 51-83 (PQAWHFSWLLLNMDKVPEIQYSAPAPCTSRSPA), 90-130 (PDQY…LSMM), 137-174 (AVADMVRMFQAEDSNVDGRARCLALLELLTVLPEEFQT), 189-226 (LAQECGSVFPLLEQLLQQQDSPGFIKQKVLKCFSSWVQ), 231-263 (LMDCENLIQAAFTSLQDPELFDTAVEAVVNAIS), 271-320 (VNTL…ALLD), 325-367 (WQSF…DDIL), 370-433 (EPDK…YEML), 435-471 (AELLSSLYDKLGRLLTNTEQPSTWQHTEALLYGFQSI), 482-517 (VVPGLIGLIPRISISNVQLADTVMFTIGALSEWLAD), 519-553 (PVMINNVLPLVLQALGNPELSISSVSTLKKICREC), 557-595 (LPPYAANIVAVSQEVLMKQIHKTSQCMWLMQALGFLLSA), 598-643 (VEEI…SNLF), 671-711 (PVVV…VKTL), 715-749 (FAPMVPQLCEMLGQMYSTIPQASAIDLTRQLVHIF), 756-798 (FPPI…ALKR), 810-840 (VKALFHCGVLSLKFPEAPTVKASCGFFTELL), 855-888 (ENGKVLLQAVLEGVGGQASRSLMDHFAEILFALN), and 892-926 (FSYLSIWIKEAMQQDGFPSARVSPEQKETFSQQIL). An Importin N-terminal domain is found at 40-106 (AQKWLMQAQV…KSQLFTHITR (67 aa)).

This sequence belongs to the importin beta family.

The protein localises to the cytoplasm. The protein resides in the nucleus. Functions in nuclear protein import as nuclear transport receptor. Serves as receptor for nuclear localization signals (NLS) in cargo substrates. Is thought to mediate docking of the importin/substrate complex to the nuclear pore complex (NPC) through binding to nucleoporin and the complex is subsequently translocated through the pore by an energy requiring, Ran-dependent mechanism. At the nucleoplasmic side of the NPC, Ran binds to the importin, the importin/substrate complex dissociates and importin is re-exported from the nucleus to the cytoplasm where GTP hydrolysis releases Ran. The directionality of nuclear import is thought to be conferred by an asymmetric distribution of the GTP- and GDP-bound forms of Ran between the cytoplasm and nucleus. The protein is Importin-13 (IPO13) of Gallus gallus (Chicken).